A 264-amino-acid chain; its full sequence is Cysteine-rich repeat secretory protein 26 (264 aa).

An N-terminal signal peptide occupies residues Met1–Ser27. Gnk2-homologous domains are found at residues Tyr34–Ser142 and Tyr148–Phe261.

This sequence belongs to the cysteine-rich repeat secretory protein family.

It is found in the secreted. This Arabidopsis thaliana (Mouse-ear cress) protein is Cysteine-rich repeat secretory protein 26 (CRRSP26).